Consider the following 382-residue polypeptide: Na(+)/H(+) antiporter NhaA 2 (382 aa).

12 consecutive transmembrane segments (helical) span residues 7-27 (AGGVLLIAASILALIFANSYL), 28-48 (SGFYNGVLNLPLVVAIGAFEI), 52-72 (LLLWVNDGLMALFFLMVGLEV), 88-108 (VLPGLAALAGVAFPAIIYASF), 118-138 (GWAIPSATDIAFALGVFSLFG), 147-167 (LFLLSVAIFDDIAAIVIIALF), 170-190 (HELSTLSLLVAGIGIVMLFVL), 206-226 (LVVWAAVLKSGVHATLAGFVI), 254-274 (VAYFILPFFAFVNAGVHLGGI), 285-305 (LGIIVGLFVGKQLGIFSVCWL), 325-345 (GVCLLAGIGFTMSLFIGSLAF), and 356-376 (VKLGVLFGSLLSAICGALILT).

This sequence belongs to the NhaA Na(+)/H(+) (TC 2.A.33) antiporter family.

The protein localises to the cell inner membrane. It catalyses the reaction Na(+)(in) + 2 H(+)(out) = Na(+)(out) + 2 H(+)(in). Its function is as follows. Na(+)/H(+) antiporter that extrudes sodium in exchange for external protons. This is Na(+)/H(+) antiporter NhaA 2 from Saccharophagus degradans (strain 2-40 / ATCC 43961 / DSM 17024).